Here is a 175-residue protein sequence, read N- to C-terminus: Endoribonuclease YbeY (175 aa).

Positions 137, 141, and 147 each coordinate Zn(2+).

It belongs to the endoribonuclease YbeY family. Zn(2+) serves as cofactor.

The protein localises to the cytoplasm. Its function is as follows. Single strand-specific metallo-endoribonuclease involved in late-stage 70S ribosome quality control and in maturation of the 3' terminus of the 16S rRNA. This chain is Endoribonuclease YbeY, found in Burkholderia ambifaria (strain ATCC BAA-244 / DSM 16087 / CCUG 44356 / LMG 19182 / AMMD) (Burkholderia cepacia (strain AMMD)).